The chain runs to 173 residues: C-phycocyanin-2 beta subunit (173 aa).

Asn73 is modified (N4-methylasparagine). Residues Cys83 and Cys154 each contribute to the (2R,3E)-phycocyanobilin site.

The protein belongs to the phycobiliprotein family. Heterodimer of an alpha and a beta subunit, which further assembles into trimers and the trimers into hexamers. In terms of processing, contains two covalently linked bilin chromophores.

It is found in the cellular thylakoid membrane. In terms of biological role, light-harvesting photosynthetic bile pigment-protein from the phycobiliprotein complex (phycobilisome, PBS). Phycocyanin is the major phycobiliprotein in the PBS rod. The protein is C-phycocyanin-2 beta subunit (cpcB2) of Synechococcus sp. (strain ATCC 27144 / PCC 6301 / SAUG 1402/1) (Anacystis nidulans).